Consider the following 173-residue polypeptide: Dual-action ribosomal maturation protein DarP (173 aa).

Belongs to the DarP family.

It is found in the cytoplasm. In terms of biological role, member of a network of 50S ribosomal subunit biogenesis factors which assembles along the 30S-50S interface, preventing incorrect 23S rRNA structures from forming. Promotes peptidyl transferase center (PTC) maturation. The polypeptide is Dual-action ribosomal maturation protein DarP (Pseudomonas putida (strain ATCC 700007 / DSM 6899 / JCM 31910 / BCRC 17059 / LMG 24140 / F1)).